A 156-amino-acid polypeptide reads, in one-letter code: UPF0232 protein BL0636 (156 aa).

This sequence belongs to the UPF0232 family.

This Bifidobacterium longum (strain NCC 2705) protein is UPF0232 protein BL0636.